The chain runs to 108 residues: Large ribosomal subunit protein uL24 (108 aa).

Belongs to the universal ribosomal protein uL24 family. As to quaternary structure, part of the 50S ribosomal subunit.

One of two assembly initiator proteins, it binds directly to the 5'-end of the 23S rRNA, where it nucleates assembly of the 50S subunit. Functionally, one of the proteins that surrounds the polypeptide exit tunnel on the outside of the subunit. The polypeptide is Large ribosomal subunit protein uL24 (Moorella thermoacetica (strain ATCC 39073 / JCM 9320)).